The chain runs to 388 residues: Na(+)/H(+) antiporter NhaA (388 aa).

11 consecutive transmembrane segments (helical) span residues 14–34, 59–79, 95–115, 125–145, 154–174, 179–199, 219–239, 254–274, 292–312, 328–348, and 356–376; these read GGII…MGAT, MLLW…GLEV, VFPV…YLAF, GWAI…ALLG, IFLM…IALF, LSIV…LLNL, VLKS…FIPL, ILHP…NAGV, IIAG…WLAL, IMAV…IASL, and ALIN…AVVG.

It belongs to the NhaA Na(+)/H(+) (TC 2.A.33) antiporter family.

The protein localises to the cell inner membrane. The enzyme catalyses Na(+)(in) + 2 H(+)(out) = Na(+)(out) + 2 H(+)(in). Na(+)/H(+) antiporter that extrudes sodium in exchange for external protons. This is Na(+)/H(+) antiporter NhaA from Salmonella arizonae (strain ATCC BAA-731 / CDC346-86 / RSK2980).